Reading from the N-terminus, the 160-residue chain is Small ribosomal subunit protein uS9 (160 aa).

It belongs to the universal ribosomal protein uS9 family.

The sequence is that of Small ribosomal subunit protein uS9 from Cereibacter sphaeroides (strain ATCC 17029 / ATH 2.4.9) (Rhodobacter sphaeroides).